A 338-amino-acid polypeptide reads, in one-letter code: Ketol-acid reductoisomerase (NADP(+)) (338 aa).

The region spanning 1-181 is the KARI N-terminal Rossmann domain; it reads MKVFYDKDCD…GGGRAGIIET (181 aa). Residues 24–27, R47, and S52 contribute to the NADP(+) site; that span reads YGSQ. H107 is an active-site residue. An NADP(+)-binding site is contributed by G133. The KARI C-terminal knotted domain occupies 182–327; that stretch reads NFREETETDL…GKLRAMMPWI (146 aa). Positions 190, 194, 226, and 230 each coordinate Mg(2+). Substrate is bound at residue S251.

This sequence belongs to the ketol-acid reductoisomerase family. Mg(2+) is required as a cofactor.

The catalysed reaction is (2R)-2,3-dihydroxy-3-methylbutanoate + NADP(+) = (2S)-2-acetolactate + NADPH + H(+). It catalyses the reaction (2R,3R)-2,3-dihydroxy-3-methylpentanoate + NADP(+) = (S)-2-ethyl-2-hydroxy-3-oxobutanoate + NADPH + H(+). The protein operates within amino-acid biosynthesis; L-isoleucine biosynthesis; L-isoleucine from 2-oxobutanoate: step 2/4. It participates in amino-acid biosynthesis; L-valine biosynthesis; L-valine from pyruvate: step 2/4. Functionally, involved in the biosynthesis of branched-chain amino acids (BCAA). Catalyzes an alkyl-migration followed by a ketol-acid reduction of (S)-2-acetolactate (S2AL) to yield (R)-2,3-dihydroxy-isovalerate. In the isomerase reaction, S2AL is rearranged via a Mg-dependent methyl migration to produce 3-hydroxy-3-methyl-2-ketobutyrate (HMKB). In the reductase reaction, this 2-ketoacid undergoes a metal-dependent reduction by NADPH to yield (R)-2,3-dihydroxy-isovalerate. This Bordetella bronchiseptica (strain ATCC BAA-588 / NCTC 13252 / RB50) (Alcaligenes bronchisepticus) protein is Ketol-acid reductoisomerase (NADP(+)).